The sequence spans 608 residues: Serine/threonine-protein kinase BUR1 (608 aa).

A Protein kinase domain is found at 39–346; the sequence is YEIIQKLGQG…ALDALNHNYF (308 aa). ATP is bound by residues 45 to 53 and Lys68; that span reads LGQGTFGVV. Catalysis depends on Asp174, which acts as the Proton acceptor. Disordered regions lie at residues 383 to 419 and 443 to 571; these read HEANKIPKAHFPKGPGEYNNSNNYPRNRNGSFPLALP and YIPK…FDED. Residues 400–411 are compositionally biased toward low complexity; the sequence is YNNSNNYPRNRN. The segment covering 471-482 has biased composition (basic and acidic residues); it reads LRDRSPRREGHI. The span at 487-502 shows a compositional bias: low complexity; it reads STTNSNNISSNSSASN. 2 stretches are compositionally biased toward polar residues: residues 503 to 512 and 539 to 548; these read VGGTLSNPTH and PQSSSRNVSD. Over residues 559-571 the composition is skewed to acidic residues; the sequence is EQNESDLTDFDED.

Belongs to the protein kinase superfamily. CMGC Ser/Thr protein kinase family. CDC2/CDKX subfamily.

The protein resides in the nucleus. It catalyses the reaction L-seryl-[protein] + ATP = O-phospho-L-seryl-[protein] + ADP + H(+). The enzyme catalyses L-threonyl-[protein] + ATP = O-phospho-L-threonyl-[protein] + ADP + H(+). It carries out the reaction [DNA-directed RNA polymerase] + ATP = phospho-[DNA-directed RNA polymerase] + ADP + H(+). Serine/threonine-protein kinase involved in transcription regulation. Phosphorylates the UBC2/RAD6 ubiquitin-conjugating enzyme (E2), leading to monoubiquitination of histone H2B and the silencing of telomeric-associated genes. Also required for histone H3 methylation. Necessary for the recovery from pheromone-induced growth arrest in the cell cycle G1 phase. The sequence is that of Serine/threonine-protein kinase BUR1 (BUR1) from Debaryomyces hansenii (strain ATCC 36239 / CBS 767 / BCRC 21394 / JCM 1990 / NBRC 0083 / IGC 2968) (Yeast).